Reading from the N-terminus, the 196-residue chain is MSLRIDAVILAGGQARRMGGQDKGLVELLGKPMIEHAITRIQPQVKEILINANRNQNLYAQFADCVFGDEDSGFLGPLAGMVTAMGKTQADLLLVVPCDCPCLPTDLVARMAAALEAEAADLAVASDGEYEQPVVMLLKPSLRDSMKAFLAAGERKIDFWYAKHKVAVVSFADQPNAFVNVNTPEQVEQLSKALTQ.

GTP-binding positions include 10–12 (LAG), lysine 23, asparagine 51, aspartate 69, and aspartate 99. Position 99 (aspartate 99) interacts with Mg(2+).

This sequence belongs to the MobA family. In terms of assembly, monomer. The cofactor is Mg(2+).

Its subcellular location is the cytoplasm. It catalyses the reaction Mo-molybdopterin + GTP + H(+) = Mo-molybdopterin guanine dinucleotide + diphosphate. Functionally, transfers a GMP moiety from GTP to Mo-molybdopterin (Mo-MPT) cofactor (Moco or molybdenum cofactor) to form Mo-molybdopterin guanine dinucleotide (Mo-MGD) cofactor. This chain is Molybdenum cofactor guanylyltransferase, found in Shewanella amazonensis (strain ATCC BAA-1098 / SB2B).